Here is an 83-residue protein sequence, read N- to C-terminus: Disintegrin isoform D-2 (83 aa).

The Disintegrin domain maps to 2 to 83 (PPVCGNELLE…GKSSDCPWNH (82 aa)). Intrachain disulfides connect C5–C24, C16–C34, C18–C29, C28–C51, C42–C48, C47–C72, and C60–C79. The Cell attachment site motif lies at 64 to 66 (RGD).

It belongs to the venom metalloproteinase (M12B) family. P-II subfamily. P-IIa sub-subfamily. As to quaternary structure, monomer (disintegrin). Expressed by the venom gland.

Its subcellular location is the secreted. In terms of biological role, inhibits fibrinogen interaction with platelets. Acts by binding to the alpha-IIb/beta-3 (ITGA2B/ITGB3) on the platelet surface and inhibits aggregation induced by ADP, thrombin, platelet-activating factor and collagen. The polypeptide is Disintegrin isoform D-2 (Bitis arietans (African puff adder)).